The chain runs to 49 residues: Omega-segestritoxin-Sf1a (49 aa).

Intrachain disulfides connect Cys-3/Cys-22, Cys-10/Cys-27, Cys-21/Cys-48, and Cys-29/Cys-46.

In terms of tissue distribution, expressed by the venom gland.

Its subcellular location is the secreted. Its function is as follows. Potent and selective blocker of N-type voltage-gated calcium channels (Cav2.2/CACNA1B). Also blocks vertebrate Cav2.1/CACNA1A (P/Q-type) and Cav1.2/CACNA1C (L-type) channels at very high concentration (2 micromolar). This chain is Omega-segestritoxin-Sf1a, found in Segestria florentina (Tube-web spider).